The following is a 104-amino-acid chain: Small ribosomal subunit protein uS10 (104 aa).

Belongs to the universal ribosomal protein uS10 family. As to quaternary structure, part of the 30S ribosomal subunit.

In terms of biological role, involved in the binding of tRNA to the ribosomes. This Dichelobacter nodosus (strain VCS1703A) protein is Small ribosomal subunit protein uS10.